A 458-amino-acid chain; its full sequence is Tetratricopeptide repeat protein 23-like (458 aa).

2 coiled-coil regions span residues 175–198 and 246–278; these read GKQA…LNNG and TSEL…QAYS.

Its subcellular location is the cytoplasm. It localises to the cytoskeleton. The protein resides in the microtubule organizing center. It is found in the centrosome. The protein localises to the spindle. Its subcellular location is the midbody. In Mus musculus (Mouse), this protein is Tetratricopeptide repeat protein 23-like (Ttc23l).